Consider the following 142-residue polypeptide: Semaphorin-like protein VACWR164 (142 aa).

Residues 1–142 form the Sema domain; that stretch reads MNTIKQSFST…MPQMKKILKM (142 aa).

Belongs to the semaphorin family.

This is Semaphorin-like protein VACWR164 from Bos taurus (Bovine).